We begin with the raw amino-acid sequence, 368 residues long: Methionine import ATP-binding protein MetN (368 aa).

Residues 1–14 (MASDAQPSVDQPSA) are compositionally biased toward polar residues. Residues 1-27 (MASDAQPSVDQPSAGTPGATGNSTGTT) are disordered. A compositionally biased stretch (low complexity) spans 15-27 (GTPGATGNSTGTT). The ABC transporter domain occupies 31–270 (IVFRDVTKIF…PQTKTAANFV (240 aa)). 67–74 (GYSGAGKS) is an ATP binding site.

This sequence belongs to the ABC transporter superfamily. Methionine importer (TC 3.A.1.24) family. In terms of assembly, the complex is composed of two ATP-binding proteins (MetN), two transmembrane proteins (MetI) and a solute-binding protein (MetQ).

It localises to the cell membrane. The enzyme catalyses L-methionine(out) + ATP + H2O = L-methionine(in) + ADP + phosphate + H(+). The catalysed reaction is D-methionine(out) + ATP + H2O = D-methionine(in) + ADP + phosphate + H(+). Its function is as follows. Part of the ABC transporter complex MetNIQ involved in methionine import. Responsible for energy coupling to the transport system. This is Methionine import ATP-binding protein MetN from Corynebacterium jeikeium (strain K411).